A 74-amino-acid chain; its full sequence is Large ribosomal subunit protein bL31 (74 aa).

4 residues coordinate Zn(2+): Cys-16, Cys-18, Cys-37, and Cys-40.

Belongs to the bacterial ribosomal protein bL31 family. Type A subfamily. Part of the 50S ribosomal subunit. The cofactor is Zn(2+).

In terms of biological role, binds the 23S rRNA. The chain is Large ribosomal subunit protein bL31 from Koribacter versatilis (strain Ellin345).